The following is a 224-amino-acid chain: PKHD-type hydroxylase Sbal195_0750 (224 aa).

One can recognise a Fe2OG dioxygenase domain in the interval glutamine 78–serine 176. Residues histidine 96, aspartate 98, and histidine 157 each coordinate Fe cation. Residue arginine 167 coordinates 2-oxoglutarate.

Requires Fe(2+) as cofactor. It depends on L-ascorbate as a cofactor.

This chain is PKHD-type hydroxylase Sbal195_0750, found in Shewanella baltica (strain OS195).